The primary structure comprises 488 residues: Probable malate:quinone oxidoreductase (488 aa).

Belongs to the MQO family. FAD is required as a cofactor.

It catalyses the reaction (S)-malate + a quinone = a quinol + oxaloacetate. It functions in the pathway carbohydrate metabolism; tricarboxylic acid cycle; oxaloacetate from (S)-malate (quinone route): step 1/1. The polypeptide is Probable malate:quinone oxidoreductase (Neisseria meningitidis serogroup B (strain ATCC BAA-335 / MC58)).